Here is a 160-residue protein sequence, read N- to C-terminus: Ribosomal RNA large subunit methyltransferase H (160 aa).

S-adenosyl-L-methionine-binding positions include Leu77, Gly109, and 128–133 (FSRLTF).

It belongs to the RNA methyltransferase RlmH family. In terms of assembly, homodimer.

It is found in the cytoplasm. The catalysed reaction is pseudouridine(1915) in 23S rRNA + S-adenosyl-L-methionine = N(3)-methylpseudouridine(1915) in 23S rRNA + S-adenosyl-L-homocysteine + H(+). Specifically methylates the pseudouridine at position 1915 (m3Psi1915) in 23S rRNA. The polypeptide is Ribosomal RNA large subunit methyltransferase H (Desulfitobacterium hafniense (strain Y51)).